The chain runs to 103 residues: Large ribosomal subunit protein bL21 (103 aa).

The protein belongs to the bacterial ribosomal protein bL21 family. As to quaternary structure, part of the 50S ribosomal subunit. Contacts protein L20.

Functionally, this protein binds to 23S rRNA in the presence of protein L20. The sequence is that of Large ribosomal subunit protein bL21 from Polynucleobacter asymbioticus (strain DSM 18221 / CIP 109841 / QLW-P1DMWA-1) (Polynucleobacter necessarius subsp. asymbioticus).